The following is a 256-amino-acid chain: Non-homologous end joining protein Ku 2 (256 aa).

Residues 13-184 (FADTDVAVKL…SLELQESPVS (172 aa)) enclose the Ku domain.

The protein belongs to the prokaryotic Ku family. Homodimer. Interacts with LigD.

In terms of biological role, with LigD forms a non-homologous end joining (NHEJ) DNA repair enzyme, which repairs dsDNA breaks with reduced fidelity. Binds linear dsDNA with 5'- and 3'- overhangs but not closed circular dsDNA nor ssDNA. Recruits and stimulates the ligase activity of LigD. This chain is Non-homologous end joining protein Ku 2, found in Geotalea uraniireducens (strain Rf4) (Geobacter uraniireducens).